The sequence spans 174 residues: Matrix protein (174 aa).

In terms of assembly, homomultimer. Interacts with nucleoprotein and with the cytoplasmic domain of glycoprotein.

It localises to the virion membrane. The protein localises to the host endomembrane system. Plays a major role in assembly and budding of virion. Completely covers the ribonucleoprotein coil and keep it in condensed bullet-shaped form. Inhibits viral transcription and stimulates replication. The sequence is that of Matrix protein (M) from Hordeum vulgare (Barley).